The following is a 248-amino-acid chain: Molybdate/tungstate transport system permease protein WtpB (248 aa).

Residues 1–9 (MGGRDYTLY) lie on the Cytoplasmic side of the membrane. A helical membrane pass occupies residues 10-30 (LFAALGSFLIVYIALPIIVIF). At 31 to 56 (TKQALDFRMLVKTIHDPLVIEALRNS) the chain is on the extracellular side. One can recognise an ABC transmembrane type-1 domain in the interval 53–239 (LRNSLLTATA…GISLGIFVVL (187 aa)). The chain crosses the membrane as a helical span at residues 57–77 (LLTATATALISLLFGVPLGYV). At 78–91 (LARKDFRGKSLVQA) the chain is on the cytoplasmic side. The chain crosses the membrane as a helical span at residues 92–112 (IIDVPIVIPHSVVGIMLLVTF). Residues 113–115 (SNA) are Extracellular-facing. Residues 116 to 136 (ILDSYKGIIAAMLFVSAPFAI) form a helical membrane-spanning segment. Topologically, residues 137–164 (NSARDGFLAVDEKLEHVARTLGASKLRT) are cytoplasmic. Residues 165–185 (FFSISLPIALPSIASGAIMAW) form a helical membrane-spanning segment. The Extracellular portion of the chain corresponds to 186–223 (ARGISEVGAILIVAYYPKTAQVLVMEYFNNYGLRASRP). A helical membrane pass occupies residues 224-244 (ISVILMGISLGIFVVLRWLIG). At 245 to 248 (KAKS) the chain is on the cytoplasmic side.

It belongs to the binding-protein-dependent transport system permease family. The complex is composed of two ATP-binding proteins (WtpC), two transmembrane proteins (WtpB) and a solute-binding protein (WtpA).

The protein resides in the cell membrane. In terms of biological role, part of the ABC transporter complex WtpABC involved in molybdate/tungstate import. Probably responsible for the translocation of the substrate across the membrane. This chain is Molybdate/tungstate transport system permease protein WtpB (wtpB), found in Pyrococcus abyssi (strain GE5 / Orsay).